The sequence spans 574 residues: Glutamyl-tRNA(Gln) amidotransferase subunit B, mitochondrial (574 aa).

The protein belongs to the GatB/GatE family. GatB subfamily. In terms of assembly, subunit of the heterotrimeric GatCAB amidotransferase (AdT) complex, composed of A, B and C subunits.

The protein resides in the mitochondrion. It carries out the reaction L-glutamyl-tRNA(Gln) + L-glutamine + ATP + H2O = L-glutaminyl-tRNA(Gln) + L-glutamate + ADP + phosphate + H(+). In terms of biological role, allows the formation of correctly charged Gln-tRNA(Gln) through the transamidation of misacylated Glu-tRNA(Gln) in the mitochondria. The reaction takes place in the presence of glutamine and ATP through an activated gamma-phospho-Glu-tRNA(Gln). The sequence is that of Glutamyl-tRNA(Gln) amidotransferase subunit B, mitochondrial from Phytophthora infestans (strain T30-4) (Potato late blight agent).